The chain runs to 440 residues: MESQQLSNYPHISHGSACASVTSKEVHTNQDPLDVSASKIQEYDKASTKANSQQTTTPASSAVPENPHHASPQPASVPPPQNGPYPQQCMMTQNQANPSGWSFYGHPSMIPYTPYQMSPMYFPPGPQSQFPQYPSSVGTPLSTPSPESGNTFTDSSSADSDMTSTKKYVRPPPMLTSPNDFPNWVKTYIKFLQNSNLGGIIPTVNGKPVRPITDDELTFLYNTFQIFAPSQFLPTWVKDILSVDYTDIMKILSKSIEKMQSDTQEANDIVTLANLQYNGSTPADAFETKVTNIIDRLNNNGIHINNKVACQLIMRGLSGEYKFLRYTRHRHLNMTVAELFLDIHAIYEEQQGSRNSKPNYRRNPSDEKNDSRSYTNTTKPKVIARNPQKTNNSKSKTARAHNVSTSNNSPSTDNDSISKSTTEPIQLNNKHDLHLRPETY.

Composition is skewed to polar residues over residues 1–10 (MESQQLSNYP), 48–60 (TKAN…TPAS), and 127–152 (QSQF…GNTF). Disordered stretches follow at residues 1–93 (MESQ…MMTQ), 126–173 (PQSQ…RPPP), and 352–440 (GSRN…PETY). The segment covering 153 to 165 (TDSSSADSDMTST) has biased composition (low complexity). Positions 299-401 (NNGIHINNKV…NSKSKTARAH (103 aa)) are RNA-binding. A compositionally biased stretch (low complexity) spans 402 to 418 (NVSTSNNSPSTDNDSIS). Position 416 is a phosphoserine (serine 416). The segment covering 419–428 (KSTTEPIQLN) has biased composition (polar residues). Over residues 429–440 (NKHDLHLRPETY) the composition is skewed to basic and acidic residues.

In terms of assembly, homotrimer.

The protein localises to the cytoplasm. Capsid protein (CA) is the structural component of the virus-like particle (VLP), forming the shell that encapsulates the retrotransposons dimeric RNA genome. The particles are assembled from trimer-clustered units and there are holes in the capsid shells that allow for the diffusion of macromolecules. CA also has nucleocapsid-like chaperone activity, promoting primer tRNA(i)-Met annealing to the multipartite primer-binding site (PBS), dimerization of Ty1 RNA and initiation of reverse transcription. The polypeptide is Transposon Ty1-PR2 Gag polyprotein (TY1A-PR2) (Saccharomyces cerevisiae (strain ATCC 204508 / S288c) (Baker's yeast)).